The primary structure comprises 133 residues: Small ribosomal subunit protein uS8 (133 aa).

The tract at residues 1–30 is disordered; that stretch reads MANHDPISDMLTRIRNASEKRHETTKVPAS. Residues 16–25 are compositionally biased toward basic and acidic residues; that stretch reads NASEKRHETT.

Belongs to the universal ribosomal protein uS8 family. In terms of assembly, part of the 30S ribosomal subunit. Contacts proteins S5 and S12.

In terms of biological role, one of the primary rRNA binding proteins, it binds directly to 16S rRNA central domain where it helps coordinate assembly of the platform of the 30S subunit. This Synechococcus sp. (strain CC9902) protein is Small ribosomal subunit protein uS8.